The following is a 151-amino-acid chain: Small ribosomal subunit protein uS15 (151 aa).

A Phosphoserine modification is found at S32. Glycyl lysine isopeptide (Lys-Gly) (interchain with G-Cter in ubiquitin) cross-links involve residues K39 and K43.

Belongs to the universal ribosomal protein uS15 family. In terms of assembly, component of the small ribosomal subunit (SSU). Mature yeast ribosomes consist of a small (40S) and a large (60S) subunit. The 40S small subunit contains 1 molecule of ribosomal RNA (18S rRNA) and 33 different proteins (encoded by 57 genes). The large 60S subunit contains 3 rRNA molecules (25S, 5.8S and 5S rRNA) and 46 different proteins (encoded by 81 genes).

It localises to the cytoplasm. In terms of biological role, component of the ribosome, a large ribonucleoprotein complex responsible for the synthesis of proteins in the cell. The small ribosomal subunit (SSU) binds messenger RNAs (mRNAs) and translates the encoded message by selecting cognate aminoacyl-transfer RNA (tRNA) molecules. The large subunit (LSU) contains the ribosomal catalytic site termed the peptidyl transferase center (PTC), which catalyzes the formation of peptide bonds, thereby polymerizing the amino acids delivered by tRNAs into a polypeptide chain. The nascent polypeptides leave the ribosome through a tunnel in the LSU and interact with protein factors that function in enzymatic processing, targeting, and the membrane insertion of nascent chains at the exit of the ribosomal tunnel. In Saccharomyces cerevisiae (strain ATCC 204508 / S288c) (Baker's yeast), this protein is Small ribosomal subunit protein uS15.